The chain runs to 464 residues: NADH-quinone oxidoreductase subunit N 2 (464 aa).

Transmembrane regions (helical) follow at residues 12-32, 33-53, 62-82, 93-113, 117-137, 152-172, 189-209, 227-247, 254-274, 282-304, 310-330, 351-371, 400-420, and 434-454; these read VGII…LIGF, LGFL…LAGY, INAF…FVIF, TFVE…IMVS, LAVI…SVGM, LVLG…YIGA, FALA…AAPF, FIST…ASYI, FSYI…LVAY, MLAY…YNPL, IFYV…LSIL, PFLA…PPFA, IIAA…EPAT, and IGIS…NILF.

The protein belongs to the complex I subunit 2 family. NDH-1 is composed of 14 different subunits. Subunits NuoA, H, J, K, L, M, N constitute the membrane sector of the complex.

Its subcellular location is the cell inner membrane. It catalyses the reaction a quinone + NADH + 5 H(+)(in) = a quinol + NAD(+) + 4 H(+)(out). In terms of biological role, NDH-1 shuttles electrons from NADH, via FMN and iron-sulfur (Fe-S) centers, to quinones in the respiratory chain. The immediate electron acceptor for the enzyme in this species is believed to be ubiquinone. Couples the redox reaction to proton translocation (for every two electrons transferred, four hydrogen ions are translocated across the cytoplasmic membrane), and thus conserves the redox energy in a proton gradient. This Hydrogenobaculum sp. (strain Y04AAS1) protein is NADH-quinone oxidoreductase subunit N 2.